The following is a 345-amino-acid chain: Heat-inducible transcription repressor HrcA (345 aa).

It belongs to the HrcA family.

Negative regulator of class I heat shock genes (grpE-dnaK-dnaJ and groELS operons). Prevents heat-shock induction of these operons. The sequence is that of Heat-inducible transcription repressor HrcA from Desulfitobacterium hafniense (strain DSM 10664 / DCB-2).